A 213-amino-acid polypeptide reads, in one-letter code: Urease accessory protein UreE (213 aa).

Residues 170 to 213 are disordered; it reads EHHGHSHSHSHSHSHDHDHDHDHDHDHDHQHGPSCSHGHHHGHR. Residues 182–200 show a composition bias toward basic and acidic residues; it reads HSHDHDHDHDHDHDHDHQH.

Belongs to the UreE family.

The protein localises to the cytoplasm. Its function is as follows. Involved in urease metallocenter assembly. Binds nickel. Probably functions as a nickel donor during metallocenter assembly. The chain is Urease accessory protein UreE from Burkholderia mallei (strain NCTC 10229).